A 436-amino-acid polypeptide reads, in one-letter code: MMHYDVAVIGGGIAGYSAALRALQAGKKVVLINQGQSALHFSSGSIDVLGRLPDGSVVNQPFDALSALQQQAPEHPYSKVGRKNSEKGLMWFKRTLDSAHVPLHHEPDGANHWRITPLGTLKNTWLSQPFVYPYRGNADFSRIMIVAIDGYRDFQPAMLRDNLAQRPELANTPMLTVNVSIPGFEGFRRNPNELRSIDIARLLRQESAWNALCDQLMRVARPDDLVIMPAIMGNGDGLHLMSKLQQVTQLRFHEVPTMPPSLLGIRIEEALHRSFIQGGGVQLKGDKVIGGNFAGSRLTAIHTQNLRDFPISAEHYVMATGSYFSQGLQASQHAIQEPIFALDVQQNPDRAQWRHAQFIAAQSHPFMTFGVTTDANLHPSRQGKTIDNLWCCGAMLSGYDPVFEGCGGGVAIATAYHAVEQILATYAQTKQPEVLL.

This sequence belongs to the anaerobic G-3-P dehydrogenase subunit B family. In terms of assembly, composed of a catalytic GlpA/B dimer and of membrane bound GlpC. It depends on FMN as a cofactor.

The enzyme catalyses a quinone + sn-glycerol 3-phosphate = dihydroxyacetone phosphate + a quinol. It participates in polyol metabolism; glycerol degradation via glycerol kinase pathway; glycerone phosphate from sn-glycerol 3-phosphate (anaerobic route): step 1/1. Functionally, conversion of glycerol 3-phosphate to dihydroxyacetone. Uses fumarate or nitrate as electron acceptor. In Vibrio cholerae serotype O1 (strain ATCC 39315 / El Tor Inaba N16961), this protein is Anaerobic glycerol-3-phosphate dehydrogenase subunit B.